We begin with the raw amino-acid sequence, 65 residues long: Toxin KTx8 (65 aa).

The N-terminal stretch at Met1–Gly25 is a signal peptide. 3 disulfide bridges follow: Cys31-Cys53, Cys38-Cys61, and Cys42-Cys63.

This sequence belongs to the short scorpion toxin superfamily. Potassium channel inhibitor family. Alpha-KTx 11 subfamily. Expressed by the venom gland.

Its subcellular location is the secreted. This recombinant toxin inhibits the mammalian voltage-gated potassium channels Kv1.3/KCNA3 in vitro with an IC(50) of 26.40 nM. The polypeptide is Toxin KTx8 (Lychas mucronatus (Chinese swimming scorpion)).